The chain runs to 667 residues: E3 ubiquitin-protein ligase Midline-1 (667 aa).

The RING-type zinc-finger motif lies at 10–60 (CPICLELFEDPLLLPCAHSLCFNCAHRILVSHCATNEPVESINAFQCPTCR). Residues Ser-92 and Ser-96 each carry the phosphoserine modification. 2 B box-type zinc fingers span residues 116-165 (KVLC…IEPI) and 172-212 (GLMC…VAAL). Residues Cys-119, Cys-122, Cys-134, Cys-137, Cys-142, Cys-145, His-150, His-159, Cys-175, His-178, Cys-198, and His-204 each coordinate Zn(2+). A coiled-coil region spans residues 205 to 264 (RDHQVAALSERYDKLKQNLESNLTNLIKRNTELETLLAKLIQTCQHVEVNASRQEAKLTE). The COS domain occupies 320–379 (LKENDHARFLQTAKNITERVSMATASSQVLIPEINLNDTFDTFALDFSREKKLLECLDYL). In terms of domain architecture, Fibronectin type-III spans 381–484 (APNPPTIREE…EPGKLKTNSQ (104 aa)). The segment covering 471 to 485 (SRSSEPGKLKTNSQP) has biased composition (polar residues). Positions 471 to 524 (SRSSEPGKLKTNSQPFKLDPKSAHRKLKVSHDNLTVERDESSSKKSHTPERFTS) are disordered. Positions 482–659 (NSQPFKLDPK…IITGLPIPDH (178 aa)) constitute a B30.2/SPRY domain. A compositionally biased stretch (basic and acidic residues) spans 499 to 520 (VSHDNLTVERDESSSKKSHTPE). Ser-511 is subject to Phosphoserine.

The protein belongs to the TRIM/RBCC family. In terms of assembly, homodimer or heterodimer with MID2. Interacts with IGBP1.

The protein localises to the cytoplasm. It is found in the cytoskeleton. It carries out the reaction S-ubiquitinyl-[E2 ubiquitin-conjugating enzyme]-L-cysteine + [acceptor protein]-L-lysine = [E2 ubiquitin-conjugating enzyme]-L-cysteine + N(6)-ubiquitinyl-[acceptor protein]-L-lysine.. Functionally, has E3 ubiquitin ligase activity towards IGBP1, promoting its monoubiquitination, which results in deprotection of the catalytic subunit of protein phosphatase PP2A, and its subsequent degradation by polyubiquitination. In Rattus norvegicus (Rat), this protein is E3 ubiquitin-protein ligase Midline-1 (Mid1).